The sequence spans 255 residues: Large ribosomal subunit protein uL4 (255 aa).

This sequence belongs to the universal ribosomal protein uL4 family. As to quaternary structure, part of the 50S ribosomal subunit.

In terms of biological role, one of the primary rRNA binding proteins, this protein initially binds near the 5'-end of the 23S rRNA. It is important during the early stages of 50S assembly. It makes multiple contacts with different domains of the 23S rRNA in the assembled 50S subunit and ribosome. Its function is as follows. Forms part of the polypeptide exit tunnel. The protein is Large ribosomal subunit protein uL4 of Thermoplasma acidophilum (strain ATCC 25905 / DSM 1728 / JCM 9062 / NBRC 15155 / AMRC-C165).